The chain runs to 86 residues: Co-chaperonin GroES (86 aa).

The protein belongs to the GroES chaperonin family. As to quaternary structure, heptamer of 7 subunits arranged in a ring. Interacts with the chaperonin GroEL.

It localises to the cytoplasm. Its function is as follows. Together with the chaperonin GroEL, plays an essential role in assisting protein folding. The GroEL-GroES system forms a nano-cage that allows encapsulation of the non-native substrate proteins and provides a physical environment optimized to promote and accelerate protein folding. GroES binds to the apical surface of the GroEL ring, thereby capping the opening of the GroEL channel. This chain is Co-chaperonin GroES, found in Campylobacter concisus (strain 13826).